The sequence spans 614 residues: Glucose oxidase 1 (614 aa).

An N-terminal signal peptide occupies residues 1 to 15 (MKSIILSCFVISAAA). Residues L52, T53, and E73 each contribute to the FAD site. A glycan (N-linked (GlcNAc...) asparagine) is linked at N112. The segment at 117–136 (IRSGNGLGGSTLTNGGSWTR) is disordered. Residues S126, N130, G131, and S133 each coordinate FAD. N-linked (GlcNAc...) asparagine glycans are attached at residues N184 and N191. C187 and C229 are disulfide-bonded. FAD is bound at residue V273. N-linked (GlcNAc...) asparagine glycans are attached at residues N279, N383, and N416. H544 serves as the catalytic Proton acceptor. 2 residues coordinate O2: R565 and V566. The FAD site is built by G577 and M589.

Belongs to the GMC oxidoreductase family. In terms of assembly, homodimer. FAD is required as a cofactor.

Its subcellular location is the secreted. It localises to the cell wall. The protein resides in the cytoplasm. The protein localises to the extracellular space. It is found in the extracellular matrix. The enzyme catalyses beta-D-glucose + O2 = D-glucono-1,5-lactone + H2O2. Functionally, glucose oxidase catalyzes the oxidation of beta-D-glucose to D-glucono-delta-lactone and hydrogen peroxide in the presence of molecular oxygen. The chain is Glucose oxidase 1 from Penicillium expansum (Blue mold rot fungus).